A 374-amino-acid polypeptide reads, in one-letter code: 1,3,6,8-tetrahydroxynaphthalene synthase (374 aa).

The active site involves cysteine 138.

Belongs to the thiolase-like superfamily. Chalcone/stilbene synthases family. In terms of assembly, homodimer.

The enzyme catalyses 5 malonyl-CoA + 5 H(+) = naphthalene-1,3,6,8-tetrol + 5 CO2 + 5 CoA + H2O. The protein operates within pigment biosynthesis; melanin biosynthesis. Involved in the biosynthesis of melanin but also various secondary metabolites containing a naphthoquinone ring. Catalyzes the iterative condensation of five CoA-linked malonyl units to form a pentaketide intermediate. THNS subsequently catalyzes the dual intramolecular Claisen and aldol condensations of this linear intermediate to produce the fused ring of 1,3,6,8-tetrahydroxynaphthalene (THN). This is 1,3,6,8-tetrahydroxynaphthalene synthase from Streptomyces coelicolor (strain ATCC BAA-471 / A3(2) / M145).